Consider the following 191-residue polypeptide: Peptidyl-tRNA hydrolase (191 aa).

Tyr-17 contributes to the tRNA binding site. The active-site Proton acceptor is His-22. Residues Tyr-68, Asn-70, and Asn-116 each contribute to the tRNA site.

This sequence belongs to the PTH family. As to quaternary structure, monomer.

Its subcellular location is the cytoplasm. It catalyses the reaction an N-acyl-L-alpha-aminoacyl-tRNA + H2O = an N-acyl-L-amino acid + a tRNA + H(+). In terms of biological role, hydrolyzes ribosome-free peptidyl-tRNAs (with 1 or more amino acids incorporated), which drop off the ribosome during protein synthesis, or as a result of ribosome stalling. Catalyzes the release of premature peptidyl moieties from peptidyl-tRNA molecules trapped in stalled 50S ribosomal subunits, and thus maintains levels of free tRNAs and 50S ribosomes. This Mycobacterium marinum (strain ATCC BAA-535 / M) protein is Peptidyl-tRNA hydrolase.